We begin with the raw amino-acid sequence, 257 residues long: Tryptophan synthase alpha chain (257 aa).

Active-site proton acceptor residues include Glu-46 and Asp-57.

Belongs to the TrpA family. As to quaternary structure, tetramer of two alpha and two beta chains.

The catalysed reaction is (1S,2R)-1-C-(indol-3-yl)glycerol 3-phosphate + L-serine = D-glyceraldehyde 3-phosphate + L-tryptophan + H2O. The protein operates within amino-acid biosynthesis; L-tryptophan biosynthesis; L-tryptophan from chorismate: step 5/5. In terms of biological role, the alpha subunit is responsible for the aldol cleavage of indoleglycerol phosphate to indole and glyceraldehyde 3-phosphate. This chain is Tryptophan synthase alpha chain, found in Parabacteroides distasonis (strain ATCC 8503 / DSM 20701 / CIP 104284 / JCM 5825 / NCTC 11152).